Consider the following 379-residue polypeptide: Carbamoyl phosphate synthase small chain (379 aa).

The tract at residues 1–183 (MTSQDRSEAV…EAYVVEPDGE (183 aa)) is CPSase. Ser51, Gly235, and Gly237 together coordinate L-glutamine. One can recognise a Glutamine amidotransferase type-1 domain in the interval 185 to 379 (LYTVVAYDMG…FVELIQANKK (195 aa)). Catalysis depends on Cys263, which acts as the Nucleophile. Residues Phe264, Gln267, Asn305, Gly307, and Phe308 each contribute to the L-glutamine site. Active-site residues include His353 and Glu355.

It belongs to the CarA family. As to quaternary structure, composed of two chains; the small (or glutamine) chain promotes the hydrolysis of glutamine to ammonia, which is used by the large (or ammonia) chain to synthesize carbamoyl phosphate. Tetramer of heterodimers (alpha,beta)4.

The catalysed reaction is hydrogencarbonate + L-glutamine + 2 ATP + H2O = carbamoyl phosphate + L-glutamate + 2 ADP + phosphate + 2 H(+). It carries out the reaction L-glutamine + H2O = L-glutamate + NH4(+). It functions in the pathway amino-acid biosynthesis; L-arginine biosynthesis; carbamoyl phosphate from bicarbonate: step 1/1. Its pathway is pyrimidine metabolism; UMP biosynthesis via de novo pathway; (S)-dihydroorotate from bicarbonate: step 1/3. Functionally, small subunit of the glutamine-dependent carbamoyl phosphate synthetase (CPSase). CPSase catalyzes the formation of carbamoyl phosphate from the ammonia moiety of glutamine, carbonate, and phosphate donated by ATP, constituting the first step of 2 biosynthetic pathways, one leading to arginine and/or urea and the other to pyrimidine nucleotides. The small subunit (glutamine amidotransferase) binds and cleaves glutamine to supply the large subunit with the substrate ammonia. This chain is Carbamoyl phosphate synthase small chain, found in Corynebacterium diphtheriae (strain ATCC 700971 / NCTC 13129 / Biotype gravis).